Here is a 384-residue protein sequence, read N- to C-terminus: Alpha-2B adrenergic receptor (384 aa).

The chain crosses the membrane as a helical span at residues 1-25 (AIAAVTTFLILFTVFGNALVILAVL). At 26–36 (TSRSLRAPQNL) the chain is on the cytoplasmic side. A helical membrane pass occupies residues 37–62 (FLVSLAAADILVATLIXPFSLANELL). The Extracellular segment spans residues 63 to 72 (GYWYFWHTWC). Cysteines 72 and 151 form a disulfide. A helical membrane pass occupies residues 73–95 (EVYLALXVLXCTSSIVHLCAISL). Residues 96–117 (DRYWAVSRALEYNSKRTPRRIX) lie on the Cytoplasmic side of the membrane. A helical membrane pass occupies residues 118-140 (GIILTVWLIAAAISLPPLIYKGD). Over 141 to 156 (QGPQPHGRPQCRLNQE) the chain is Extracellular. Residues 157 to 180 (AWYILSSSIGSFFAPCLIMILVYL) form a helical membrane-spanning segment. Residues 181 to 348 (RIYLIAKRRN…LTREKRFTFV (168 aa)) are Cytoplasmic-facing. A disordered region spans residues 193–306 (GPRAQGASKG…SXGSPQLQQP (114 aa)). Low complexity predominate over residues 288-306 (PEALPASPASXGSPQLQQP). A helical transmembrane segment spans residues 349–372 (LAVVIGVXVLCWFPFFXSYSLGAI). At 373–381 (CPQHCTVXH) the chain is on the extracellular side. Residues 382-384 (GLF) traverse the membrane as a helical segment.

Belongs to the G-protein coupled receptor 1 family. Adrenergic receptor subfamily. ADRA2B sub-subfamily. As to quaternary structure, interacts with RAB26. Interacts with PPP1R9B. Interacts with GGA1, GGA2 and GGA3.

It localises to the cell membrane. In terms of biological role, alpha-2 adrenergic receptors mediate the catecholamine-induced inhibition of adenylate cyclase through the action of G proteins. The sequence is that of Alpha-2B adrenergic receptor (ADRA2B) from Echinops telfairi (Lesser hedgehog tenrec).